The primary structure comprises 124 residues: Small ribosomal subunit protein uS12 (124 aa).

D89 bears the 3-methylthioaspartic acid mark. K108 bears the N6-acetyllysine mark.

The protein belongs to the universal ribosomal protein uS12 family. Part of the 30S ribosomal subunit. Contacts proteins S8 and S17. May interact with IF1 in the 30S initiation complex.

In terms of biological role, with S4 and S5 plays an important role in translational accuracy. Its function is as follows. Interacts with and stabilizes bases of the 16S rRNA that are involved in tRNA selection in the A site and with the mRNA backbone. Located at the interface of the 30S and 50S subunits, it traverses the body of the 30S subunit contacting proteins on the other side and probably holding the rRNA structure together. The combined cluster of proteins S8, S12 and S17 appears to hold together the shoulder and platform of the 30S subunit. The sequence is that of Small ribosomal subunit protein uS12 from Escherichia coli O6:K15:H31 (strain 536 / UPEC).